The chain runs to 67 residues: Large ribosomal subunit protein uL29 (67 aa).

The protein belongs to the universal ribosomal protein uL29 family.

This is Large ribosomal subunit protein uL29 from Rubrobacter xylanophilus (strain DSM 9941 / JCM 11954 / NBRC 16129 / PRD-1).